The primary structure comprises 276 residues: Sulfur carrier protein FdhD (276 aa).

The Cysteine persulfide intermediate role is filled by cysteine 120.

It belongs to the FdhD family.

The protein localises to the cytoplasm. Functionally, required for formate dehydrogenase (FDH) activity. Acts as a sulfur carrier protein that transfers sulfur from IscS to the molybdenum cofactor prior to its insertion into FDH. This Bordetella bronchiseptica (strain ATCC BAA-588 / NCTC 13252 / RB50) (Alcaligenes bronchisepticus) protein is Sulfur carrier protein FdhD.